A 102-amino-acid chain; its full sequence is Small ribosomal subunit protein uS10 (102 aa).

It belongs to the universal ribosomal protein uS10 family. In terms of assembly, part of the 30S ribosomal subunit.

Functionally, involved in the binding of tRNA to the ribosomes. This is Small ribosomal subunit protein uS10 from Methanococcus maripaludis (strain C7 / ATCC BAA-1331).